We begin with the raw amino-acid sequence, 307 residues long: Lactamase-like protein vrtG (307 aa).

Residues His97, His99, Asp101, and His102 each contribute to the Zn(2+) site. Asp101 functions as the Proton donor/acceptor in the catalytic mechanism.

This sequence belongs to the metallo-beta-lactamase superfamily. The cofactor is Zn(2+).

It functions in the pathway secondary metabolite biosynthesis; terpenoid biosynthesis. Functionally, lactamase-like protein; part of the gene cluster that mediates the biosynthesis of viridicatumtoxin, a tetracycline-like fungal meroterpenoid with a unique, fused spirobicyclic ring system. The first step of the pathway is the production of the malonamoyl-CoA starter unit for the polyketide synthase vrtA. The aldolase vrtJ may be involved in the synthesis of the malonamate substrate for malonamoyl-CoA synthetase vrtB. The polyketide synthase vrtA then may utilize the malonamoyl-CoA starter unit, followed by sequential condensation of eight malonyl-CoA units to form the polyketide backbone. The cyclization of the last ring could be mediated by the lactamase-like protein vrtG. The proposed post-PKS tailoring steps are a hydroxylation at C5 catalyzed the cytochrome P450 monooxygenase vrtE, a hydroxylation at C12a catalyzed by VrtH and/or VrtI, and an O-methylation by the O-methyltransferase vrtF. VrtC is then proposed to catalyze the transfer of a geranyl group synthesized by vrtD to the aromatic C ring of the tetracyclic polyketide intermediate of viridicatumtoxin to yield previridicatumtoxin. Finally, the cytochrome P450 monooxygenase vrtK catalyzes the spirocyclization of the geranyl moiety of previridicatumtoxin to afford viridicatumtoxin. The chain is Lactamase-like protein vrtG from Penicillium aethiopicum.